We begin with the raw amino-acid sequence, 693 residues long: Elongation factor G (693 aa).

In terms of domain architecture, tr-type G spans 6-286; it reads KYTRNIGIAA…AICRYLPSPI (281 aa). GTP contacts are provided by residues 15–22, 83–87, and 137–140; these read AHIDAGKT, DTPGH, and NKMD.

Belongs to the TRAFAC class translation factor GTPase superfamily. Classic translation factor GTPase family. EF-G/EF-2 subfamily.

It localises to the cytoplasm. In terms of biological role, catalyzes the GTP-dependent ribosomal translocation step during translation elongation. During this step, the ribosome changes from the pre-translocational (PRE) to the post-translocational (POST) state as the newly formed A-site-bound peptidyl-tRNA and P-site-bound deacylated tRNA move to the P and E sites, respectively. Catalyzes the coordinated movement of the two tRNA molecules, the mRNA and conformational changes in the ribosome. This chain is Elongation factor G, found in Karelsulcia muelleri (strain GWSS) (Sulcia muelleri).